The chain runs to 611 residues: Protein PES4 (611 aa).

The tract at residues 37–81 (FNPVVTPIRPDDYHEKTSRSSSSSHSDSPEFLRINNNKSGHKNGK) is disordered. Basic and acidic residues predominate over residues 45–54 (RPDDYHEKTS). 4 RRM domains span residues 91–169 (VPLF…PSLR), 179–247 (TNVF…GKKI), 303–379 (NSIF…RAQD), and 393–471 (STLF…WERQ).

It is found in the nucleus. This is Protein PES4 (PES4) from Saccharomyces cerevisiae (strain ATCC 204508 / S288c) (Baker's yeast).